Reading from the N-terminus, the 383-residue chain is Putative gustatory receptor 22c (383 aa).

The Cytoplasmic segment spans residues 1 to 11 (MFASRSDLQSR). Residues 12 to 32 (LCWIILKATLYSSWFLGVFPY) traverse the membrane as a helical segment. Topologically, residues 33–45 (RFDSRNGQLKRSR) are extracellular. The helical transmembrane segment at 46–66 (FLLFYGLILNFFLLLKMVCSG) threads the bilayer. Residues 67–86 (GQKLGIPEAFARNSVLENTH) lie on the Cytoplasmic side of the membrane. Residues 87-107 (YTTGMLAVFSCVVIHFLNFWG) form a helical membrane-spanning segment. Topologically, residues 108 to 144 (STRVQDLANELLVLEYQQFASLNETKCPKFNSFVIQK) are extracellular. A glycan (N-linked (GlcNAc...) asparagine) is linked at Asn130. The chain crosses the membrane as a helical span at residues 145–165 (WLSVIGLLLSYLSIAYGLPGN). Over 166 to 250 (NFSVEMVLIN…YMVATYEYHM (85 aa)) the chain is Cytoplasmic. Residues 251–271 (TLVLTTGLASNFLAIYSWIVL) form a helical membrane-spanning segment. The Extracellular portion of the chain corresponds to 272–279 (DISMNINF). A helical membrane pass occupies residues 280–300 (IYLLIFPLFLLVNVWNLWLSI). Topologically, residues 301–360 (AASDLAENAGKSTQTVLKLFADLEVKDIELERSVNEFALLCGHCQFNFHVCGLFTINYKM) are cytoplasmic. A helical membrane pass occupies residues 361 to 381 (GFQMIITSFLYLIYMIQFDFM). Topologically, residues 382-383 (NL) are extracellular.

Belongs to the insect chemoreceptor superfamily. Gustatory receptor (GR) family. Gr22e subfamily. As to expression, taste bristles in the foreleg and labial palps.

The protein localises to the cell membrane. Its function is as follows. Probable gustatory receptor which mediates acceptance or avoidance behavior, depending on its substrates. In Drosophila melanogaster (Fruit fly), this protein is Putative gustatory receptor 22c (Gr22c).